The following is a 92-amino-acid chain: MIKSFKHKGLKLLFEKGVTSGVPAQDVDRINDRLQAIDTATEIGELNRQIYKLHPLKGDREGYWSITVRANWRITFQFINGDAYILNYEDYH.

His92 is a catalytic residue.

As to quaternary structure, forms a complex with the antitoxin HigA which inhibits the mRNA interferase activity. The heterodimer dimerizes to form a HigB-(HigA)2-HigB tetramer that is able to bind to the DNA.

Its function is as follows. Toxic component of a type II toxin-antitoxin (TA) system. A ribosome-associated translation-dependent mRNA interferase. Inhibits translation by sequence-specific cleavage of mRNA. Prefers either in-frame or out-of-frame 5'-AAA-3' codons (lysine). Also cleaves the first three AAAs of stretches of four or more A sequences. 20% of codons containing AA are cleaved and occassionally cuts even at a single A. This Proteus vulgaris protein is Endoribonuclease HigB.